We begin with the raw amino-acid sequence, 655 residues long: D-xylonate dehydratase YagF (655 aa).

It belongs to the IlvD/Edd family.

The enzyme catalyses D-xylonate = 2-dehydro-3-deoxy-D-arabinonate + H2O. Functionally, catalyzes the dehydration of D-xylonic acid to form 2-dehydro-3-deoxy-D-pentonate. This is D-xylonate dehydratase YagF (yagF) from Escherichia coli (strain K12).